Consider the following 160-residue polypeptide: MIKNRKKKSYTSVYALGQYISMSAHKARRVIDQIRGRSYEEALMILELMPYRGCYPIFKLVYSAAANASHNKGFKETNLVISKAEVNQGNTVKKLKPRARGRSFPIKRSTCHITIVVEDISFYQQYEEYLRYLKNPGCSNENRNLTCYDTYSSGGPWDKK.

Belongs to the universal ribosomal protein uL22 family. Part of the 50S ribosomal subunit.

Its subcellular location is the plastid. It localises to the chloroplast. Functionally, this protein binds specifically to 23S rRNA. The globular domain of the protein is located near the polypeptide exit tunnel on the outside of the subunit, while an extended beta-hairpin is found that lines the wall of the exit tunnel in the center of the 70S ribosome. The sequence is that of Large ribosomal subunit protein uL22c (rpl22) from Lepidium virginicum (Virginia pepperweed).